The sequence spans 441 residues: Chitinase-like protein Idgf3 (441 aa).

The signal sequence occupies residues 1 to 23; the sequence is MSGSLWLSLALSLAVLAQFKVSA. The GH18 domain occupies 25-441; that stretch reads PNLVCFYDSQ…MLRAIKYRLL (417 aa). C29 and C56 form a disulfide bridge. N221 carries N-linked (GlcNAc...) asparagine glycosylation. The segment at 310–331 is disordered; it reads GDSGMPVVSSTQGPAPAGPQSK. A disulfide bridge links C342 with C425.

This sequence belongs to the glycosyl hydrolase 18 family. IDGF subfamily. Post-translationally, glycosylated.

Its subcellular location is the secreted. In terms of biological role, cooperates with insulin-like peptides to stimulate the proliferation, polarization and motility of imaginal disk cells. May act by stabilizing the binding of insulin-like peptides to its receptor through a simultaneous interaction with both molecules to form a multiprotein signaling complex. The protein is Chitinase-like protein Idgf3 (Idgf3) of Drosophila simulans (Fruit fly).